The following is a 246-amino-acid chain: Probable transcriptional regulatory protein CLL_A1008 (246 aa).

Belongs to the TACO1 family.

The protein localises to the cytoplasm. This Clostridium botulinum (strain Eklund 17B / Type B) protein is Probable transcriptional regulatory protein CLL_A1008.